The following is a 100-amino-acid chain: Secreted protein of Ly-6 domain 1 (100 aa).

Residues 1–22 (MAKCLLLLLLVVLSSLLGLPQA) form the signal peptide. Positions 23-100 (LECFQCNRVN…CHDSPLCNKF (78 aa)) constitute a UPAR/Ly6 domain. Intrachain disulfides connect Cys25–Cys52, Cys28–Cys37, Cys44–Cys70, Cys74–Cys90, and Cys91–Cys97. An N-linked (GlcNAc...) asparagine glycan is attached at Asn60.

Post-translationally, glycosylated. In terms of tissue distribution, expressed in placenta, where it is detected in both fetal tissues (cotyledon and intercotyledon) and maternal tissues (caruncle and intercaruncular endometrium) (at protein level). Expressed in the mesenchyme area of villi in the cotyledon (at protein level). In endometrium, expressed in the luminal epithelium and weakly in the subluminal stroma (at protein level). Detected in trophoblast mononucleate cells (TMCs) (at protein level). Also detected in trophoblast binucleate cells (BNCs). Overall, expression is strongest in fetal tissue and lower in maternal tissue. Not detected in other tissues tested.

Its subcellular location is the secreted. Functionally, binds specifically to type I collagen. This chain is Secreted protein of Ly-6 domain 1, found in Bos taurus (Bovine).